Consider the following 1035-residue polypeptide: FACT complex subunit SPT16 (1035 aa).

The stretch at 432 to 500 (FLKKEDEEEE…AKRRLTEQKG (69 aa)) forms a coiled coil. Disordered regions lie at residues 491 to 520 (AKRR…ASQV) and 920 to 1035 (EQGG…KRKK). Residues 499-519 (KGGQQTMKARKSNVSYKNASQ) are compositionally biased toward polar residues. The span at 929 to 985 (PDGEGSDAAEGDSESELDDETFNPSEDEEEEEEDSDEDYSDETEDSVDSEESADSEE) shows a compositional bias: acidic residues. The span at 986-1006 (ESGKDWDELEEEARKADRESL) shows a compositional bias: basic and acidic residues.

This sequence belongs to the peptidase M24 family. SPT16 subfamily. Component of the FACT complex (also called the DUF complex), a stable heterodimer of ssrp1 and supt16h. May also be a component of a ck2-spt16-ssrp1 complex composed of ssrp1, supt16h, csnk2a1, csnk2a2 and csnk2b. The FACT complex may also interact with vcp.

The protein resides in the nucleus. Its subcellular location is the chromosome. Component of the FACT complex, a general chromatin factor that acts to reorganize nucleosomes. The FACT complex is involved in multiple processes that require DNA as a template such as mRNA elongation, DNA replication and DNA repair. During transcription elongation the FACT complex acts as a histone chaperone that both destabilizes and restores nucleosomal structure. It facilitates the passage of RNA polymerase II and transcription by promoting the dissociation of one histone H2A-H2B dimer from the nucleosome, then subsequently promotes the reestablishment of the nucleosome following the passage of RNA polymerase II. This Xenopus laevis (African clawed frog) protein is FACT complex subunit SPT16 (supt16h).